We begin with the raw amino-acid sequence, 338 residues long: Glycerol-3-phosphate dehydrogenase [NAD(P)+] (338 aa).

4 residues coordinate NADPH: Ser-14, Tyr-15, His-35, and Lys-109. 3 residues coordinate sn-glycerol 3-phosphate: Lys-109, Gly-138, and Thr-140. Ala-142 is an NADPH binding site. Sn-glycerol 3-phosphate is bound by residues Lys-194, Asp-247, Ser-257, Arg-258, and Asn-259. The active-site Proton acceptor is the Lys-194. Position 258 (Arg-258) interacts with NADPH. The NADPH site is built by Val-282 and Glu-284.

This sequence belongs to the NAD-dependent glycerol-3-phosphate dehydrogenase family.

It localises to the cytoplasm. The enzyme catalyses sn-glycerol 3-phosphate + NAD(+) = dihydroxyacetone phosphate + NADH + H(+). It carries out the reaction sn-glycerol 3-phosphate + NADP(+) = dihydroxyacetone phosphate + NADPH + H(+). Its pathway is membrane lipid metabolism; glycerophospholipid metabolism. Catalyzes the reduction of the glycolytic intermediate dihydroxyacetone phosphate (DHAP) to sn-glycerol 3-phosphate (G3P), the key precursor for phospholipid synthesis. The polypeptide is Glycerol-3-phosphate dehydrogenase [NAD(P)+] (Shewanella baltica (strain OS195)).